The following is a 480-amino-acid chain: Amino acid permease 5 (480 aa).

Residues 1-25 (MVVQNVQDLDVLPKHSSDSFDDDGR) are disordered. Over 1-31 (MVVQNVQDLDVLPKHSSDSFDDDGRPKRTGT) the chain is Cytoplasmic. The segment covering 11–25 (VLPKHSSDSFDDDGR) has biased composition (basic and acidic residues). Helical transmembrane passes span 32 to 52 (VWTA…LSLA) and 53 to 73 (WAVA…FSFV). The Cytoplasmic portion of the chain corresponds to 74-120 (TFYTSTLLCSCYRSGDSVTGKRNYTYMDAIHSNLGGIKVKVCGVVQY). The helical transmembrane segment at 121–141 (VNLFGTAIGYTIASAISLVAI) threads the bilayer. The Extracellular segment spans residues 142–157 (QRTSCQQMNGPNDPCH). A helical membrane pass occupies residues 158–178 (VNGNVYMIAFGIVQIIFSQIP). Residues 179-182 (DFDQ) lie on the Cytoplasmic side of the membrane. The chain crosses the membrane as a helical span at residues 183 to 203 (LWWLSIVAAVMSFAYSAIGLG). The Extracellular segment spans residues 204 to 241 (LGVSKVVENKEIKGSLTGVTVGTVTLSGTVTSSQKIWR). A helical membrane pass occupies residues 242–262 (TFQSLGNIAFAYSYSMILIEI). At 263–280 (QDTVKSPPAEVNTMRKAT) the chain is on the cytoplasmic side. A helical transmembrane segment spans residues 281-301 (FVSVAVTTVFYMLCGCVGYAA). Topologically, residues 302-328 (FGDNAPGNLLAHGGFRNPYWLLDIANL) are extracellular. A helical transmembrane segment spans residues 329–349 (AIVIHLVGAYQVYCQPLFAFV). Residues 350-383 (EKEASRRFPESEFVTKEIKIQLFPGKPFNLNLFR) lie on the Cytoplasmic side of the membrane. Residues 384 to 404 (LVWRTFFVMTTTLISMLMPFF) form a helical membrane-spanning segment. Residues 405-406 (ND) are Extracellular-facing. Residues 407–427 (VVGLLGAIGFWPLTVYFPVEM) traverse the membrane as a helical segment. Over 428–445 (YIAQKNVPRWGTKWVCLQ) the chain is Cytoplasmic. The helical transmembrane segment at 446 to 466 (VLSVTCLFVSVAAAAGSVIGI) threads the bilayer. The Extracellular portion of the chain corresponds to 467-480 (VSDLKVYKPFQSEF).

This sequence belongs to the amino acid/polyamine transporter 2 family. Amino acid/auxin permease (AAAP) (TC 2.A.18.2) subfamily. Expressed in leaves, stems, roots, siliques and flowers.

The protein localises to the cell membrane. Inhibited by 2,4-dinitrophenol. Functionally, amino acid-proton symporter. Stereospecific transporter with a broad specificity for glutamate and both neutral and basic amino acids. Reduced affinities for asparagine and valine. High affinity transport of the cationic amino acids arginine and lysine, but not of histidine. This Arabidopsis thaliana (Mouse-ear cress) protein is Amino acid permease 5 (AAP5).